Here is a 471-residue protein sequence, read N- to C-terminus: Serine hydroxymethyltransferase 4 (471 aa).

N-acetylmethionine is present on M1. Position 39 (S39) interacts with L-serine. Residues S39, Y59, and E61 each coordinate pemetrexed. The L-serine site is built by E61 and Y69. Pemetrexed-binding positions include S105–S107, H134, S190, and H218. H218 and K244 together coordinate L-serine. K244 bears the N6-(pyridoxal phosphate)lysine mark. Pemetrexed is bound at residue G290. Position 373 (K373) interacts with methotrexate. R389 is a binding site for L-serine. R389 contacts pemetrexed.

Belongs to the SHMT family. Homotetramer. Interacts with UBP16. Pyridoxal 5'-phosphate is required as a cofactor. As to expression, mostly expressed in flowers, less abundant in roots, inflorescence stems, and siliques, and barely detectable in leaves.

The protein localises to the cytoplasm. It catalyses the reaction (6R)-5,10-methylene-5,6,7,8-tetrahydrofolate + glycine + H2O = (6S)-5,6,7,8-tetrahydrofolate + L-serine. Its pathway is one-carbon metabolism; tetrahydrofolate interconversion. Inhibited by the antifolate drugs methotrexate and pemetrexed. Its function is as follows. Catalyzes the interconversion of serine and glycine with the conversion of tetrahydrofolate (THF) into 5,10-methylene-THF. The chain is Serine hydroxymethyltransferase 4 from Arabidopsis thaliana (Mouse-ear cress).